The sequence spans 484 residues: tRNA sulfurtransferase (484 aa).

In terms of domain architecture, THUMP spans 63 to 167 (ELFAERLAHI…RDKLYMVSQR (105 aa)). ATP contacts are provided by residues 185 to 186 (LI), Lys-267, Gly-289, and Gln-298. A disulfide bridge links Cys-346 with Cys-458. One can recognise a Rhodanese domain in the interval 406 to 484 (AAGNEVIIDI…GYNNVKVYRP (79 aa)). Catalysis depends on Cys-458, which acts as the Cysteine persulfide intermediate.

Belongs to the ThiI family.

Its subcellular location is the cytoplasm. It carries out the reaction [ThiI sulfur-carrier protein]-S-sulfanyl-L-cysteine + a uridine in tRNA + 2 reduced [2Fe-2S]-[ferredoxin] + ATP + H(+) = [ThiI sulfur-carrier protein]-L-cysteine + a 4-thiouridine in tRNA + 2 oxidized [2Fe-2S]-[ferredoxin] + AMP + diphosphate. It catalyses the reaction [ThiS sulfur-carrier protein]-C-terminal Gly-Gly-AMP + S-sulfanyl-L-cysteinyl-[cysteine desulfurase] + AH2 = [ThiS sulfur-carrier protein]-C-terminal-Gly-aminoethanethioate + L-cysteinyl-[cysteine desulfurase] + A + AMP + 2 H(+). The protein operates within cofactor biosynthesis; thiamine diphosphate biosynthesis. Its function is as follows. Catalyzes the ATP-dependent transfer of a sulfur to tRNA to produce 4-thiouridine in position 8 of tRNAs, which functions as a near-UV photosensor. Also catalyzes the transfer of sulfur to the sulfur carrier protein ThiS, forming ThiS-thiocarboxylate. This is a step in the synthesis of thiazole, in the thiamine biosynthesis pathway. The sulfur is donated as persulfide by IscS. This Shewanella amazonensis (strain ATCC BAA-1098 / SB2B) protein is tRNA sulfurtransferase.